We begin with the raw amino-acid sequence, 129 residues long: Small ribosomal subunit protein uS11 (129 aa).

This sequence belongs to the universal ribosomal protein uS11 family. In terms of assembly, part of the 30S ribosomal subunit. Interacts with proteins S7 and S18. Binds to IF-3.

Located on the platform of the 30S subunit, it bridges several disparate RNA helices of the 16S rRNA. Forms part of the Shine-Dalgarno cleft in the 70S ribosome. The polypeptide is Small ribosomal subunit protein uS11 (Bacillus mycoides (strain KBAB4) (Bacillus weihenstephanensis)).